The primary structure comprises 275 residues: Prohibitin-1 (275 aa).

The AIM motif lies at 106–109 (YQNL).

The protein belongs to the prohibitin family. The mitochondrial prohibitin complex consists of two subunits (PHB1 and PHB2). The subunits assemble into a membrane-associated ring-shaped supercomplex of approximately 1 mDa. Interacts with ATG24/SNX4; the interaction is direct and plays a role in mitophagy.

The protein resides in the mitochondrion inner membrane. Functionally, prohibitin probably acts as a holdase/unfoldase for the stabilization of newly synthesized mitochondrial proteins. Involved in mitophagy. Required for the switch to necrotrophic growth. The sequence is that of Prohibitin-1 from Colletotrichum higginsianum (strain IMI 349063) (Crucifer anthracnose fungus).